Here is a 1206-residue protein sequence, read N- to C-terminus: DNA polymerase beta (1206 aa).

A run of 4 repeats spans residues 1071–1074, 1075–1078, 1079–1082, and 1083–1086. The interval 1071–1086 is 4 X 4 AA tandem repeats of A-G-[NK]-[PA]; sequence AGNPAGNPAGNPAGNA.

It belongs to the DNA polymerase type-B family.

The catalysed reaction is DNA(n) + a 2'-deoxyribonucleoside 5'-triphosphate = DNA(n+1) + diphosphate. DNA-directed DNA polymerase involved in viral DNA replication. The chain is DNA polymerase beta from Ornithodoros (relapsing fever ticks).